The primary structure comprises 315 residues: MLEIEKPKIECIEMTENGSYGKFVVEPLERGYGITLGNALRRILLSSLPGVAVNSIKIENVLHEFSTVKGVKEDVTEIILNIKLLALKMTGEGPKTIYIDAKGPGVVTAADIKTDSDVEIINKDLHIATLDDDGKLYIEMTVDRGRGYVSQNRNKVEGMPIGTIPIDSIYTPVKRVNFTVANTRVGQITDYDKLTLEIWTNGTIMPDDAISLSAKILIEHFKLFMTLTDHADDVEIMVEKEEDKKEKVLEMTIEELDLSVRSYNCLKRAGINTVQELTERTVEDMMKVRNLGRKSLEEVEQKLEALELGLKQSEE.

Positions 1–228 (MLEIEKPKIE…EHFKLFMTLT (228 aa)) are alpha N-terminal domain (alpha-NTD). The alpha C-terminal domain (alpha-CTD) stretch occupies residues 245–315 (KEKVLEMTIE…LELGLKQSEE (71 aa)).

The protein belongs to the RNA polymerase alpha chain family. As to quaternary structure, homodimer. The RNAP catalytic core consists of 2 alpha, 1 beta, 1 beta' and 1 omega subunit. When a sigma factor is associated with the core the holoenzyme is formed, which can initiate transcription.

It carries out the reaction RNA(n) + a ribonucleoside 5'-triphosphate = RNA(n+1) + diphosphate. Its function is as follows. DNA-dependent RNA polymerase catalyzes the transcription of DNA into RNA using the four ribonucleoside triphosphates as substrates. This chain is DNA-directed RNA polymerase subunit alpha, found in Clostridium tetani (strain Massachusetts / E88).